A 571-amino-acid polypeptide reads, in one-letter code: Urease subunit alpha (571 aa).

Residues H138, H140, and K221 each contribute to the Ni(2+) site. K221 is modified (N6-carboxylysine). Substrate is bound at residue H223. Residues H250 and H276 each contribute to the Ni(2+) site. H324 acts as the Proton donor in catalysis. D364 contributes to the Ni(2+) binding site.

Belongs to the metallo-dependent hydrolases superfamily. Urease alpha subunit family. Heterotrimer of UreA (gamma), UreB (beta) and UreC (alpha) subunits. Three heterotrimers associate to form the active enzyme. It depends on Ni cation as a cofactor. Carboxylation allows a single lysine to coordinate two nickel ions.

The protein localises to the cytoplasm. The catalysed reaction is urea + 2 H2O + H(+) = hydrogencarbonate + 2 NH4(+). It functions in the pathway nitrogen metabolism; urea degradation; CO(2) and NH(3) from urea (urease route): step 1/1. This is Urease subunit alpha from Staphylococcus aureus (strain JH9).